Consider the following 119-residue polypeptide: Fluoride-specific ion channel FluC 2 (119 aa).

2 consecutive transmembrane segments (helical) span residues 1–21 and 44–64; these read MIFA…ALTS and GAFF…YAFL. Na(+)-binding residues include glycine 70 and threonine 73. A helical transmembrane segment spans residues 98-118; that stretch reads LLASYLGGAVLLTCGYYLGSL.

This sequence belongs to the fluoride channel Fluc/FEX (TC 1.A.43) family.

The protein resides in the cell membrane. It carries out the reaction fluoride(in) = fluoride(out). Its activity is regulated as follows. Na(+) is not transported, but it plays an essential structural role and its presence is essential for fluoride channel function. Its function is as follows. Fluoride-specific ion channel. Important for reducing fluoride concentration in the cell, thus reducing its toxicity. This is Fluoride-specific ion channel FluC 2 from Lactobacillus delbrueckii subsp. bulgaricus (strain ATCC 11842 / DSM 20081 / BCRC 10696 / JCM 1002 / NBRC 13953 / NCIMB 11778 / NCTC 12712 / WDCM 00102 / Lb 14).